Reading from the N-terminus, the 120-residue chain is C-type natriuretic peptide 4 (120 aa).

The signal sequence occupies residues 1–22 (MNLSYLVACGLMITLLSVRMGA). Positions 23–96 (KPLSQAQQKS…PRRHKTGIKK (74 aa)) are excised as a propeptide. Cysteines 104 and 120 form a disulfide.

Belongs to the natriuretic peptide family.

Its subcellular location is the secreted. In terms of biological role, exhibits natriuretic and vasodepressant activity. Has cGMP-stimulating activity. May help to regulate body fluid homeostasis in a variety of aquatic environments. The polypeptide is C-type natriuretic peptide 4 (Takifugu rubripes (Japanese pufferfish)).